Reading from the N-terminus, the 422-residue chain is Serine--tRNA ligase (422 aa).

229–231 (TAE) lines the L-serine pocket. Position 258 to 260 (258 to 260 (RRE)) interacts with ATP. Position 281 (glutamate 281) interacts with L-serine. Residue 345–348 (EISS) participates in ATP binding. Serine 379 lines the L-serine pocket.

Belongs to the class-II aminoacyl-tRNA synthetase family. Type-1 seryl-tRNA synthetase subfamily. Homodimer. The tRNA molecule binds across the dimer.

The protein resides in the cytoplasm. It catalyses the reaction tRNA(Ser) + L-serine + ATP = L-seryl-tRNA(Ser) + AMP + diphosphate + H(+). The enzyme catalyses tRNA(Sec) + L-serine + ATP = L-seryl-tRNA(Sec) + AMP + diphosphate + H(+). The protein operates within aminoacyl-tRNA biosynthesis; selenocysteinyl-tRNA(Sec) biosynthesis; L-seryl-tRNA(Sec) from L-serine and tRNA(Sec): step 1/1. In terms of biological role, catalyzes the attachment of serine to tRNA(Ser). Is also able to aminoacylate tRNA(Sec) with serine, to form the misacylated tRNA L-seryl-tRNA(Sec), which will be further converted into selenocysteinyl-tRNA(Sec). The polypeptide is Serine--tRNA ligase (Methanosarcina mazei (strain ATCC BAA-159 / DSM 3647 / Goe1 / Go1 / JCM 11833 / OCM 88) (Methanosarcina frisia)).